A 510-amino-acid chain; its full sequence is Light-independent protochlorophyllide reductase subunit B (510 aa).

D36 is a [4Fe-4S] cluster binding site. Residue D296 is the Proton donor of the active site. 431-432 lines the substrate pocket; the sequence is GM.

This sequence belongs to the ChlB/BchB/BchZ family. In terms of assembly, protochlorophyllide reductase is composed of three subunits; ChlL, ChlN and ChlB. Forms a heterotetramer of two ChlB and two ChlN subunits. [4Fe-4S] cluster serves as cofactor.

Its subcellular location is the plastid. The protein localises to the chloroplast. It carries out the reaction chlorophyllide a + oxidized 2[4Fe-4S]-[ferredoxin] + 2 ADP + 2 phosphate = protochlorophyllide a + reduced 2[4Fe-4S]-[ferredoxin] + 2 ATP + 2 H2O. Its pathway is porphyrin-containing compound metabolism; chlorophyll biosynthesis (light-independent). In terms of biological role, component of the dark-operative protochlorophyllide reductase (DPOR) that uses Mg-ATP and reduced ferredoxin to reduce ring D of protochlorophyllide (Pchlide) to form chlorophyllide a (Chlide). This reaction is light-independent. The NB-protein (ChlN-ChlB) is the catalytic component of the complex. The chain is Light-independent protochlorophyllide reductase subunit B from Stigeoclonium helveticum (Green alga).